Here is a 294-residue protein sequence, read N- to C-terminus: Glyceraldehyde-3-phosphate dehydrogenase (294 aa).

Residues Asp-19, Lys-63, and Thr-105 each contribute to the NAD(+) site. Residues 134 to 136 (SCT), Thr-165, 194 to 195 (TG), and Arg-217 contribute to the D-glyceraldehyde 3-phosphate site. The active-site Nucleophile is Cys-135.

The protein belongs to the glyceraldehyde-3-phosphate dehydrogenase family. In terms of assembly, homotetramer.

The protein resides in the cytoplasm. It carries out the reaction D-glyceraldehyde 3-phosphate + phosphate + NAD(+) = (2R)-3-phospho-glyceroyl phosphate + NADH + H(+). The protein operates within carbohydrate degradation; glycolysis; pyruvate from D-glyceraldehyde 3-phosphate: step 1/5. Catalyzes the oxidative phosphorylation of glyceraldehyde 3-phosphate (G3P) to 1,3-bisphosphoglycerate (BPG) using the cofactor NAD. The first reaction step involves the formation of a hemiacetal intermediate between G3P and a cysteine residue, and this hemiacetal intermediate is then oxidized to a thioester, with concomitant reduction of NAD to NADH. The reduced NADH is then exchanged with the second NAD, and the thioester is attacked by a nucleophilic inorganic phosphate to produce BPG. This chain is Glyceraldehyde-3-phosphate dehydrogenase (gap), found in Atlantibacter hermannii (Escherichia hermannii).